We begin with the raw amino-acid sequence, 189 residues long: Peptidyl-tRNA hydrolase (189 aa).

Y16 contributes to the tRNA binding site. The active-site Proton acceptor is H21. Positions 67, 69, and 115 each coordinate tRNA.

It belongs to the PTH family. In terms of assembly, monomer.

The protein localises to the cytoplasm. The enzyme catalyses an N-acyl-L-alpha-aminoacyl-tRNA + H2O = an N-acyl-L-amino acid + a tRNA + H(+). In terms of biological role, hydrolyzes ribosome-free peptidyl-tRNAs (with 1 or more amino acids incorporated), which drop off the ribosome during protein synthesis, or as a result of ribosome stalling. Catalyzes the release of premature peptidyl moieties from peptidyl-tRNA molecules trapped in stalled 50S ribosomal subunits, and thus maintains levels of free tRNAs and 50S ribosomes. The protein is Peptidyl-tRNA hydrolase of Legionella pneumophila subsp. pneumophila (strain Philadelphia 1 / ATCC 33152 / DSM 7513).